A 91-amino-acid chain; its full sequence is Acylphosphatase (91 aa).

The Acylphosphatase-like domain occupies 6–91 (CMRCYISGRV…WEDYISFDVL (86 aa)). Catalysis depends on residues arginine 21 and asparagine 39.

The protein belongs to the acylphosphatase family.

It carries out the reaction an acyl phosphate + H2O = a carboxylate + phosphate + H(+). This is Acylphosphatase (acyP) from Legionella pneumophila subsp. pneumophila (strain Philadelphia 1 / ATCC 33152 / DSM 7513).